Consider the following 96-residue polypeptide: Class I hydrophobin 3 (96 aa).

The N-terminal stretch at 1 to 18 is a signal peptide; it reads MQFAKIASVLAMAAAAVA. Intrachain disulfides connect Cys-43–Cys-72, Cys-51–Cys-66, Cys-52–Cys-57, and Cys-73–Cys-92.

Belongs to the fungal hydrophobin family.

The protein resides in the secreted. It localises to the cell wall. Functionally, aerial growth, conidiation, and dispersal of filamentous fungi in the environment rely upon a capability of their secreting small amphipathic proteins called hydrophobins (HPBs) with low sequence identity. Class I can self-assemble into an outermost layer of rodlet bundles on aerial cell surfaces, conferring cellular hydrophobicity that supports fungal growth, development and dispersal; whereas Class II form highly ordered films at water-air interfaces through intermolecular interactions but contribute nothing to the rodlet structure. Does not seem to be important for the ability to cause seedling disease. The sequence is that of Class I hydrophobin 3 from Gibberella moniliformis (Maize ear and stalk rot fungus).